A 553-amino-acid chain; its full sequence is Arylsulfatase K (553 aa).

The signal sequence occupies residues 1-16 (MLLLLVSVVAALALAA). The Ca(2+) site is built by D40 and C80. The Nucleophile role is filled by C80. Position 80 is a 3-oxoalanine (Cys) (C80). N-linked (GlcNAc...) asparagine glycosylation is present at N108. K128 is a binding site for substrate. N191 is a glycosylation site (N-linked (GlcNAc...) asparagine). H249 is a substrate binding site. N260 carries N-linked (GlcNAc...) asparagine glycosylation. Ca(2+) contacts are provided by D311 and H312. N-linked (GlcNAc...) asparagine glycans are attached at residues N373, N411, and N496. Positions 530–553 (SPLASSPTQSTSGSQPTLPQSTSG) are disordered. Residues 534 to 553 (SSPTQSTSGSQPTLPQSTSG) show a composition bias toward low complexity.

This sequence belongs to the sulfatase family. The cofactor is Ca(2+). The conversion to 3-oxoalanine (also known as C-formylglycine, FGly), of a serine or cysteine residue in prokaryotes and of a cysteine residue in eukaryotes, is critical for catalytic activity. In terms of processing, the 75-kDa precursor undergoes proteolytic processing to yield a 23 kDa form. Post-translationally, N-glycosylated with both high mannose and complex type sugars.

It localises to the secreted. Its subcellular location is the lysosome. It catalyses the reaction an aryl sulfate + H2O = a phenol + sulfate + H(+). The catalysed reaction is Hydrolysis of the 2-sulfate groups of the 2-O-sulfo-D-glucuronate residues of chondroitin sulfate, heparin and heparitin sulfate.. Functionally, catalyzes the hydrolysis of pseudosubstrates such as p-nitrocatechol sulfate and p-nitrophenyl sulfate. Catalyzes the hydrolysis of the 2-sulfate groups of the 2-O-sulfo-D-glucuronate residues of chondroitin sulfate, heparin and heparitin sulfate. Acts selectively on 2-sulfoglucuronate and lacks activity against 2-sulfoiduronate. This Mus musculus (Mouse) protein is Arylsulfatase K (Arsk).